Here is a 294-residue protein sequence, read N- to C-terminus: N-acetylmuramic acid 6-phosphate etherase (294 aa).

Residues 54–217 (VIKSFEEEGR…STASMIGVGK (164 aa)) form the SIS domain. The active-site Proton donor is E82. Residue E113 is part of the active site.

It belongs to the GCKR-like family. MurNAc-6-P etherase subfamily. Homodimer.

The enzyme catalyses N-acetyl-D-muramate 6-phosphate + H2O = N-acetyl-D-glucosamine 6-phosphate + (R)-lactate. It functions in the pathway amino-sugar metabolism; N-acetylmuramate degradation. Its function is as follows. Specifically catalyzes the cleavage of the D-lactyl ether substituent of MurNAc 6-phosphate, producing GlcNAc 6-phosphate and D-lactate. In Bacillus cereus (strain B4264), this protein is N-acetylmuramic acid 6-phosphate etherase.